The chain runs to 747 residues: MKTDIQTELTQALLSHEKVWANEEKTILAKNILLDLVEKTDPTIIGLLLGNDDLKRHFFVEVNGVLVFKLQDFRFFLDKHSINNSYTKYANRIGLTDGNRFLKDSSDIVLDFPFKDCVLNGGQSTEEGEEIYFKRNNSQSVSQSVSQSVSQSVSQSVSQSVSQSVSQSVSQSVSQSVSQLYTKLTRKRQEIFFNQTLAFDEIDRLFDAKAFSKFSRYTADGKQAVGEIKRHSDGTPAENLIIKGNNLIALHSLAKQFKGKVKLIYIDPPYNTGNDGFKYNDKFNHSTWLTFMKNRLEIAKTLLADDGVIFVQCDDIEQAYLKILMDDIFDRDNFLNIVTVKTKIGGVSGSSEGKSLKDSTEFINVFSKNRERLFLNPVYQKTEVNEFIKNYEDSGKSWKYTQVLIDLGEKILLEEKDGFKYYHYPNAQMTSIVKFSQDQNLSKEIIYTEYSHKVYRTTNAQSSIRSKIIEDLYSIKNGIVSIEYIPQKGKNAGNLIEVFYNASNKDMFMFLSDMLIKEKNKYFYLQKVNTLWDDIQYNNLNKEGGYIDFKNGKKPEALLRRIIDMTTKEGDIVLDYHLGSGTTAAVAHKMNRQYIGIEQMDYIETLAVERLKKVIDGEQGGISKAVNWQGGGEFVYAELAPFNETAKQQILACEDSDDIKTLFEDLCERYFLKYNVSVKEFSQIIEEPEFQSLPLDEQKQMVLEMLDLNQMYVSLSEMDDEQFAGCLNDDDKALSRAFYQAEKKDGE.

The interval 267 to 270 (DPPY) is binding of S-adenosyl methionine.

The protein belongs to the N(4)/N(6)-methyltransferase family. In terms of assembly, homodimer, also forms a functional restriction-competent complex with Res.

It catalyses the reaction a 2'-deoxyadenosine in DNA + S-adenosyl-L-methionine = an N(6)-methyl-2'-deoxyadenosine in DNA + S-adenosyl-L-homocysteine + H(+). In terms of biological role, a beta subtype methylase that binds the system-specific DNA recognition site 5'-CGAAT-3' and methylates A-4 (of only 1 strand). DNA restriction requires both the Res and Mod subunits. In Haemophilus influenzae (strain ATCC 51907 / DSM 11121 / KW20 / Rd), this protein is Probable type III restriction-modification enzyme HindVI Mod subunit.